We begin with the raw amino-acid sequence, 102 residues long: Integration host factor subunit beta (102 aa).

The protein belongs to the bacterial histone-like protein family. In terms of assembly, heterodimer of an alpha and a beta chain.

This protein is one of the two subunits of integration host factor, a specific DNA-binding protein that functions in genetic recombination as well as in transcriptional and translational control. The polypeptide is Integration host factor subunit beta (Rhodopseudomonas palustris (strain BisA53)).